The primary structure comprises 134 residues: ATP synthase epsilon chain, chloroplastic (134 aa).

It belongs to the ATPase epsilon chain family. F-type ATPases have 2 components, CF(1) - the catalytic core - and CF(0) - the membrane proton channel. CF(1) has five subunits: alpha(3), beta(3), gamma(1), delta(1), epsilon(1). CF(0) has three main subunits: a, b and c.

The protein localises to the plastid. It localises to the chloroplast thylakoid membrane. In terms of biological role, produces ATP from ADP in the presence of a proton gradient across the membrane. The protein is ATP synthase epsilon chain, chloroplastic of Nymphaea alba (White water-lily).